Consider the following 144-residue polypeptide: Cytochrome c-type biogenesis protein CcmE (144 aa).

Residues 1 to 7 (MTRKQKR) lie on the Cytoplasmic side of the membrane. A helical; Signal-anchor for type II membrane protein membrane pass occupies residues 8–28 (LAVIGSGMGFLALAAALTFYA). Topologically, residues 29–144 (LGQQTSYFYM…LKKDGLWQEQ (116 aa)) are periplasmic. His-122 and Tyr-126 together coordinate heme.

Belongs to the CcmE/CycJ family.

It localises to the cell inner membrane. Heme chaperone required for the biogenesis of c-type cytochromes. Transiently binds heme delivered by CcmC and transfers the heme to apo-cytochromes in a process facilitated by CcmF and CcmH. The chain is Cytochrome c-type biogenesis protein CcmE from Chelativorans sp. (strain BNC1).